We begin with the raw amino-acid sequence, 145 residues long: Putative pre-16S rRNA nuclease (145 aa).

The protein belongs to the YqgF nuclease family.

It localises to the cytoplasm. Could be a nuclease involved in processing of the 5'-end of pre-16S rRNA. The protein is Putative pre-16S rRNA nuclease of Microcystis aeruginosa (strain NIES-843 / IAM M-2473).